A 279-amino-acid chain; its full sequence is MYGYRRLRSPRDSQTEPQNDNEGETSLATTQMNPPKRRQVEQGPSTGAKKPSISGAPHLNSYQSLELPQNQQDSGTEELMIVLEQGTEVRLSLEEVILILAPETVLQLTLENTVLVIVPEHVLRSEDGLQSPVQIQYIIPSVDDFSLEFHAQDGDISDMRRENVPFSPAEEGKAAPLYQQPLMIPQANHMAGISPSFLVTPLCIPRCRAAFPQCYPLPPTPSPVGRPRPADSSFSLHGMELLCTSSLRPMPPSPSPGPQVYHRVHHRPPSRARRCLFRK.

2 disordered regions span residues 1–60 and 247–270; these read MYGY…PHLN and LRPMPPSPSPGPQVYHRVHHRPPS. Residues 15–33 show a composition bias toward polar residues; sequence TEPQNDNEGETSLATTQMN.

This sequence belongs to the PRR23 family.

This chain is Proline-rich protein 23D1 (PRR23D1), found in Homo sapiens (Human).